Here is a 195-residue protein sequence, read N- to C-terminus: Imidazoleglycerol-phosphate dehydratase (195 aa).

The protein belongs to the imidazoleglycerol-phosphate dehydratase family.

The protein localises to the cytoplasm. The enzyme catalyses D-erythro-1-(imidazol-4-yl)glycerol 3-phosphate = 3-(imidazol-4-yl)-2-oxopropyl phosphate + H2O. The protein operates within amino-acid biosynthesis; L-histidine biosynthesis; L-histidine from 5-phospho-alpha-D-ribose 1-diphosphate: step 6/9. The sequence is that of Imidazoleglycerol-phosphate dehydratase from Burkholderia pseudomallei (strain 1710b).